A 337-amino-acid chain; its full sequence is Serpentine receptor class delta-18 (337 aa).

The next 6 membrane-spanning stretches (helical) occupy residues 2–22, 90–110, 130–150, 187–207, 236–256, and 270–290; these read IIFF…LNLL, VGLS…LLSF, LILV…TIFA, IYSI…IFIL, ALTI…FYFL, and SIYA…LYFV.

Belongs to the nematode receptor-like protein srd family.

It localises to the membrane. The sequence is that of Serpentine receptor class delta-18 (srd-18) from Caenorhabditis elegans.